Reading from the N-terminus, the 150-residue chain is Large ribosomal subunit protein bL9 (150 aa).

It belongs to the bacterial ribosomal protein bL9 family.

In terms of biological role, binds to the 23S rRNA. The chain is Large ribosomal subunit protein bL9 from Paraburkholderia phymatum (strain DSM 17167 / CIP 108236 / LMG 21445 / STM815) (Burkholderia phymatum).